Reading from the N-terminus, the 552-residue chain is Mothers against decapentaplegic homolog 4 (552 aa).

Residues 1-322 (MDNMSITNTP…PISNHPAPEY (322 aa)) form a mediates interaction with ZBTB7A region. The MH1 domain maps to 18-142 (SIVHSLMCHR…YERVVSPGID (125 aa)). Position 37 is an N6-acetyllysine (Lys37). A required for interaction with TSC22D1 region spans residues 44–69 (VKKLKEKKDELDSLITAITTNGAHPS). Cys71 is a binding site for Zn(2+). Lys113 is covalently cross-linked (Glycyl lysine isopeptide (Lys-Gly) (interchain with G-Cter in SUMO2)). Cys115, Cys127, and His132 together coordinate Zn(2+). Residues 167–193 (EGQPSLPTEGHSIQTIQHPPSNRASTE) form a disordered region. Residues 177–193 (HSIQTIQHPPSNRASTE) show a composition bias toward polar residues. An SAD region spans residues 275–320 (PYTPNLPHHQNGHLQHHPPMPPHPGHYWPVHNELAFQPPISNHPAP). In terms of domain architecture, MH2 spans 323–552 (WCSIAYFEMD…MPIADPQPLD (230 aa)). 2 positions are modified to N6-acetyllysine: Lys428 and Lys507. Lys519 participates in a covalent cross-link: Glycyl lysine isopeptide (Lys-Gly) (interchain with G-Cter in ubiquitin).

The protein belongs to the dwarfin/SMAD family. In terms of assembly, monomer; in the absence of TGF-beta activation. Heterotrimer; on TGF-beta activation. Heterotrimer composed of two molecules of a C-terminally phosphorylated R-SMAD molecule, SMAD2 or SMAD3, and one molecule of SMAD4 to form the transcriptional active SMAD2/SMAD3-SMAD4 complex. Found in a ternary complex composed of SMAD4, STK11/LKB1 and STK11IP. Found in a complex with SMAD1 and YY1. Identified in a complex that contains at least ZNF451, SMAD2, SMAD3 and SMAD4. Interacts with ATF2, COPS5, DACH1, MSG1, SKI, STK11/LKB1, STK11IP and TRIM33. Associates with ZNF423 or ZNF521 in response to BMP2 leading to activate transcription of BMP target genes. Interacts with USP9X. Interacts with RBPMS. Interacts with WWTR1 (via coiled-coil domain). Interacts with CITED1 and CITED2. Interacts with PDPK1 (via PH domain). Interacts with VPS39; this interaction affects heterodimer formation with SMAD3, but not with SMAD2, and leads to inhibition of SMAD3-dependent transcription activation. Interactions with VPS39 and SMAD2 may be mutually exclusive. Interacts (via MH2 domain) with ZNF451 (via N-terminal zinc-finger domains). Interacts with ZC3H3. Interacts weakly with ZNF8. Interacts with NUP93 and IPO7; translocates SMAD4 to the nucleus through the NPC upon BMP7 stimulation resulting in activation of SMAD4 signaling. Interacts with CREB3L1, the interaction takes place upon TGFB1 induction and SMAD4 acts as a CREB3L1 coactivator to induce the expression of genes involved in the assembly of collagen extracellular matrix. Interacts with DLX1. Interacts with ZBTB7A; the interaction is direct and stimulated by TGFB1. Interacts with CREBBP; the recruitment of this transcriptional coactivator is negatively regulated by ZBTB7A. Interacts with EP300; the interaction with this transcriptional coactivator is negatively regulated by ZBTB7A. Interacts with HDAC1. Interacts (via MH2 domain) with ZMIZ1 (via SP-RING-type domain); in the TGF-beta signaling pathway increases the activity of the SMAD3/SMAD4 transcriptional complex. Interacts (via N-terminus) with TSC22D1. In terms of processing, phosphorylated by PDPK1. Post-translationally, monoubiquitinated on Lys-519 by E3 ubiquitin-protein ligase TRIM33. Monoubiquitination hampers its ability to form a stable complex with activated SMAD2/3 resulting in inhibition of TGF-beta/BMP signaling cascade. Deubiquitination by USP9X restores its competence to mediate TGF-beta signaling.

It localises to the cytoplasm. The protein localises to the nucleus. In terms of biological role, common SMAD (co-SMAD) is the coactivator and mediator of signal transduction by TGF-beta (transforming growth factor). Component of the heterotrimeric SMAD2/SMAD3-SMAD4 complex that forms in the nucleus and is required for the TGF-mediated signaling. Promotes binding of the SMAD2/SMAD4/FAST-1 complex to DNA and provides an activation function required for SMAD1 or SMAD2 to stimulate transcription. Component of the multimeric SMAD3/SMAD4/JUN/FOS complex which forms at the AP1 promoter site; required for synergistic transcriptional activity in response to TGF-beta. Acts synergistically with SMAD1 and YY1 in bone morphogenetic protein (BMP)-mediated cardiac-specific gene expression. Binds to SMAD binding elements (SBEs) (5'-GTCT/AGAC-3') within BMP response element (BMPRE) of cardiac activating regions. May act as a tumor suppressor. Positively regulates PDPK1 kinase activity by stimulating its dissociation from the 14-3-3 protein YWHAQ which acts as a negative regulator. In muscle physiology, plays a central role in the balance between atrophy and hypertrophy. When recruited by MSTN, promotes atrophy response via phosphorylated SMAD2/4. MSTN decrease causes SMAD4 release and subsequent recruitment by the BMP pathway to promote hypertrophy via phosphorylated SMAD1/5/8. The sequence is that of Mothers against decapentaplegic homolog 4 (Smad4) from Rattus norvegicus (Rat).